Here is a 276-residue protein sequence, read N- to C-terminus: Alpha N-terminal protein methyltransferase 1 (276 aa).

S-adenosyl-L-methionine is bound by residues Gly-96, Arg-101, 118–120 (EPV), 149–150 (LQ), and Gln-165.

The protein belongs to the methyltransferase superfamily. NTM1 family.

The enzyme catalyses N-terminal L-alanyl-L-prolyl-L-lysyl-[protein] + 3 S-adenosyl-L-methionine = N-terminal N,N,N-trimethyl-L-alanyl-L-prolyl-L-lysyl-[protein] + 3 S-adenosyl-L-homocysteine + 3 H(+). It catalyses the reaction N-terminal L-seryl-L-prolyl-L-lysyl-[protein] + 3 S-adenosyl-L-methionine = N-terminal N,N,N-trimethyl-L-seryl-L-prolyl-L-lysyl-[protein] + 3 S-adenosyl-L-homocysteine + 3 H(+). It carries out the reaction N-terminal L-prolyl-L-prolyl-L-lysyl-[protein] + 2 S-adenosyl-L-methionine = N-terminal N,N-dimethyl-L-prolyl-L-prolyl-L-lysyl-[protein] + 2 S-adenosyl-L-homocysteine + 2 H(+). Its function is as follows. Alpha-N-methyltransferase that methylates the N-terminus of target proteins containing the N-terminal motif [Ala/Pro/Ser]-Pro-Lys when the initiator Met is cleaved. Specifically catalyzes mono-, di- or tri-methylation of exposed alpha-amino group of Ala or Ser residue in the [Ala/Ser]-Pro-Lys motif and mono- or di-methylation of Pro in the Pro-Pro-Lys motif. The polypeptide is Alpha N-terminal protein methyltransferase 1 (Arabidopsis thaliana (Mouse-ear cress)).